The sequence spans 378 residues: Quinolinate synthase (378 aa).

The iminosuccinate site is built by H59 and S80. Residue C125 participates in [4Fe-4S] cluster binding. Iminosuccinate is bound by residues 151 to 153 (YAN) and S168. [4Fe-4S] cluster is bound at residue C212. Iminosuccinate is bound by residues 238-240 (HPE) and T255. C309 provides a ligand contact to [4Fe-4S] cluster.

This sequence belongs to the quinolinate synthase family. Type 1 subfamily. Requires [4Fe-4S] cluster as cofactor.

It is found in the cytoplasm. The catalysed reaction is iminosuccinate + dihydroxyacetone phosphate = quinolinate + phosphate + 2 H2O + H(+). It participates in cofactor biosynthesis; NAD(+) biosynthesis; quinolinate from iminoaspartate: step 1/1. In terms of biological role, catalyzes the condensation of iminoaspartate with dihydroxyacetone phosphate to form quinolinate. The chain is Quinolinate synthase from Burkholderia pseudomallei (strain 668).